We begin with the raw amino-acid sequence, 457 residues long: Argininosuccinate lyase (457 aa).

Belongs to the lyase 1 family. Argininosuccinate lyase subfamily.

Its subcellular location is the cytoplasm. It catalyses the reaction 2-(N(omega)-L-arginino)succinate = fumarate + L-arginine. It participates in amino-acid biosynthesis; L-arginine biosynthesis; L-arginine from L-ornithine and carbamoyl phosphate: step 3/3. In Staphylococcus carnosus (strain TM300), this protein is Argininosuccinate lyase.